A 451-amino-acid chain; its full sequence is Phenylalanine--tRNA ligase, mitochondrial (451 aa).

Substrate contacts are provided by residues 157–160 (SAHQ), arginine 179, 186–188 (QHY), and 193–195 (QLE). N6-acetyllysine is present on lysine 202. Positions 287 and 312 each coordinate substrate. Residues 358–450 (SKYPAVFNDI…AVQLLGVEGR (93 aa)) form the FDX-ACB domain.

It belongs to the class-II aminoacyl-tRNA synthetase family. As to quaternary structure, monomer.

It is found in the mitochondrion matrix. Its subcellular location is the mitochondrion. It carries out the reaction tRNA(Phe) + L-phenylalanine + ATP = L-phenylalanyl-tRNA(Phe) + AMP + diphosphate + H(+). Functionally, is responsible for the charging of tRNA(Phe) with phenylalanine in mitochondrial translation. To a lesser extent, also catalyzes direct attachment of m-Tyr (an oxidized version of Phe) to tRNA(Phe), thereby opening the way for delivery of the misacylated tRNA to the ribosome and incorporation of ROS-damaged amino acid into proteins. The chain is Phenylalanine--tRNA ligase, mitochondrial (Fars2) from Mus musculus (Mouse).